A 371-amino-acid polypeptide reads, in one-letter code: MSYILAEALNFVRRGISHLNYWGASHSLSADNYWESNFQGFPRLLSDSSKAPSTIRTVQVLEDDVDDIAIQYNKIVRGPLDYLLAIPGKDIRSKLIDSFNIWLQLPEEKLSIVKDIINLLHTASLLIDDIQDASRLRRGKPVAHDVYGVAQTINSANYAYYLQQARLKEIGDPRAFEIFTRSLLDLHLGQGMDLYWRDMVVCPTEEEYTRMVMYKTGGLFNLALDLMRIQSRKNTDFSKLVELLGVIFQIRDDYMNLQSGLYAEKKGLMEDLTEGKFSYPIIHSIRASPESSELLDILKQRTEDEAVKIRAVKIMESTGSFQYTRETLSRLSAEARGYVKKLETSLGPNPGIHKILDLLEVEYPTNEKGRV.

Positions 89, 92, and 121 each coordinate isopentenyl diphosphate. The Mg(2+) site is built by Asp-128 and Asp-132. Arg-137 contributes to the dimethylallyl diphosphate binding site. Arg-138 is an isopentenyl diphosphate binding site. Residues Lys-215, Thr-216, and Gln-249 each coordinate dimethylallyl diphosphate. Asp-252 is a Mg(2+) binding site. Dimethylallyl diphosphate-binding residues include Asn-256, Lys-266, and Lys-276. The Peroxisomal targeting signal signature appears at 369–371; it reads GRV.

The protein belongs to the FPP/GGPP synthase family. Mg(2+) is required as a cofactor.

It is found in the peroxisome. The catalysed reaction is isopentenyl diphosphate + dimethylallyl diphosphate = (2E)-geranyl diphosphate + diphosphate. It carries out the reaction isopentenyl diphosphate + (2E)-geranyl diphosphate = (2E,6E)-farnesyl diphosphate + diphosphate. The enzyme catalyses isopentenyl diphosphate + (2E,6E)-farnesyl diphosphate = (2E,6E,10E)-geranylgeranyl diphosphate + diphosphate. The protein operates within secondary metabolite biosynthesis. Its function is as follows. Geranylgeranyl pyrophosphate synthase; part of the gene cluster that mediates the biosynthesis of paxilline, a mycotoxin that acts as an inhibitor of mammalian maxi-K channels. PaxG, the geranylgeranyl diphosphate (GGPP) synthase is proposed to catalyze the first step in paxilline biosynthesis. Condensation of indole-3-glycerol phosphate with GGPP by paxC then forms 3-geranylgeranylindole (3-GGI), followed by epoxidation and cyclization of this intermediate (by paxM and paxB) to form paspaline. Paspaline is subsequently converted to 13-desoxypaxilline by paxP, the latter being then converted to paxilline by paxQ. Finally paxilline can be mono- and di-prenylated by paxD. In Penicillium paxilli, this protein is Geranylgeranyl pyrophosphate synthase paxG.